Here is a 513-residue protein sequence, read N- to C-terminus: Histidine ammonia-lyase (513 aa).

The 5-imidazolinone (Ala-Gly) cross-link spans 144–146; the sequence is ASG. 2,3-didehydroalanine (Ser) is present on serine 145.

This sequence belongs to the PAL/histidase family. Post-translationally, contains an active site 4-methylidene-imidazol-5-one (MIO), which is formed autocatalytically by cyclization and dehydration of residues Ala-Ser-Gly.

Its subcellular location is the cytoplasm. It catalyses the reaction L-histidine = trans-urocanate + NH4(+). It participates in amino-acid degradation; L-histidine degradation into L-glutamate; N-formimidoyl-L-glutamate from L-histidine: step 1/3. This Streptococcus pyogenes serotype M5 (strain Manfredo) protein is Histidine ammonia-lyase.